The sequence spans 57 residues: UPF0391 membrane protein RPD_2934 (57 aa).

The next 2 helical transmembrane spans lie at 6–26 and 35–55; these read WALIFLVISVVAGIFGFTGVS and ILFYIFAAIFIVLLILGFTIF.

This sequence belongs to the UPF0391 family.

It is found in the cell membrane. The polypeptide is UPF0391 membrane protein RPD_2934 (Rhodopseudomonas palustris (strain BisB5)).